A 367-amino-acid polypeptide reads, in one-letter code: MEQTSMGKDSSKTAIAKFVPDDDGVLKHTIKVHQQPTSATEKKGPSMIARSNDLIEEIQIKRRFGEGTKPLFERDDVKVNTVADGESISSKKIKSHKASSPSKGVNGLVKQNSPDVTQKFTKKYGSSENPDFRRHSSYEKDNYHKSNSKSGVHLEGHEGNYRPYFSDPIRERDRLRRLYGSPNERRSRSHSPSSNRRRSSHRSRRGSGSPRSRRYTSRHRRRSNSQDRTSWKHNPEHRTSRRSRTRSPRGNRSRRRSSTSSNEDDEREYRHRHHRSQERSYQNVLPTLPPALTNYPCHYHVAPMLALPGVQHRPFLPMVASVRHLPPQALYGGLAGAMPFIPMPMTAYRPHLGHRYPPPRHKINKKN.

Residues 86-280 (ESISSKKIKS…HRHHRSQERS (195 aa)) are disordered. Polar residues predominate over residues 109–129 (VKQNSPDVTQKFTKKYGSSEN). Basic and acidic residues predominate over residues 130 to 144 (PDFRRHSSYEKDNYH). A compositionally biased stretch (basic residues) spans 195 to 223 (NRRRSSHRSRRGSGSPRSRRYTSRHRRRS). Over residues 229–238 (TSWKHNPEHR) the composition is skewed to basic and acidic residues. Residues 239–257 (TSRRSRTRSPRGNRSRRRS) are compositionally biased toward basic residues.

In terms of biological role, sex differentiation protein controlling female somatic sexual differentiation. May act by promoting the formation of a splicing enhancer complex. This chain is Female-specific protein transformer, found in Musca domestica (House fly).